The sequence spans 73 residues: Putative sulfur carrier protein AF_0556 (73 aa).

C11 acts as the Cysteine persulfide intermediate in catalysis.

This sequence belongs to the sulfur carrier protein TusA family.

The polypeptide is Putative sulfur carrier protein AF_0556 (Archaeoglobus fulgidus (strain ATCC 49558 / DSM 4304 / JCM 9628 / NBRC 100126 / VC-16)).